The sequence spans 534 residues: MKYIVVTGGVMSGLGKGITIASIGRNLKNKGYKVTAIKIDPYINIDAGTMSPYQHGEVFVLRDGGEVDLDLGNYERFLDTELTRDHNITTGKVYQEVIAKERRGDYLGKTVQIIPHITNEIKNKIRKVAARSGADVCLIEIGGTVGDIESMPFLEAVRQMHREEPSENIVFIHVTLVMEDLQGEQKTKPTQHSVKELRALGLSPEVIVTRSKTPLQESAKEKIALFCDVPQELVISAHDAGDIYEVPLEIEEQGLTTQLMKHLRLESGVDDGGWREMVARMKSTTDEVKLAIVGKYTNLEDSYLSILEAVKHGGIDNACRVEVNMVEAETLEEDLVEVEKLKQYDGILIPGGFGGRGTEGKMLAIKFARENDIPFLGICLGMQLAVIEFARNVANLENANSTEFDEDTPYPVIDILPEQTGVADMGGTMRLGDYDAILKEGSFATKLYGTNYIVERHRHRYEVNPEFVDRLESFGIVFSGKNKNRMEIAEIPGKRFFFASQFHPEFKSRPGRPSPPFKGLVRAMCKYRKEREVQ.

An amidoligase domain region spans residues 1–265 (MKYIVVTGGV…TTQLMKHLRL (265 aa)). Serine 12 contacts CTP. Serine 12 is a binding site for UTP. 13 to 18 (GLGKGI) serves as a coordination point for ATP. Tyrosine 53 serves as a coordination point for L-glutamine. Aspartate 70 lines the ATP pocket. Positions 70 and 140 each coordinate Mg(2+). Residues 147 to 149 (DIE), 186 to 191 (KTKPTQ), and lysine 222 each bind CTP. Residues 186–191 (KTKPTQ) and lysine 222 contribute to the UTP site. One can recognise a Glutamine amidotransferase type-1 domain in the interval 289-530 (KLAIVGKYTN…VRAMCKYRKE (242 aa)). L-glutamine is bound at residue glycine 352. Cysteine 379 (nucleophile; for glutamine hydrolysis) is an active-site residue. L-glutamine is bound by residues 380–383 (LGMQ), glutamate 403, and arginine 460. Active-site residues include histidine 503 and glutamate 505.

It belongs to the CTP synthase family. As to quaternary structure, homotetramer.

It carries out the reaction UTP + L-glutamine + ATP + H2O = CTP + L-glutamate + ADP + phosphate + 2 H(+). It catalyses the reaction L-glutamine + H2O = L-glutamate + NH4(+). The catalysed reaction is UTP + NH4(+) + ATP = CTP + ADP + phosphate + 2 H(+). Its pathway is pyrimidine metabolism; CTP biosynthesis via de novo pathway; CTP from UDP: step 2/2. Allosterically activated by GTP, when glutamine is the substrate; GTP has no effect on the reaction when ammonia is the substrate. The allosteric effector GTP functions by stabilizing the protein conformation that binds the tetrahedral intermediate(s) formed during glutamine hydrolysis. Inhibited by the product CTP, via allosteric rather than competitive inhibition. In terms of biological role, catalyzes the ATP-dependent amination of UTP to CTP with either L-glutamine or ammonia as the source of nitrogen. Regulates intracellular CTP levels through interactions with the four ribonucleotide triphosphates. The polypeptide is CTP synthase (Methanosarcina mazei (strain ATCC BAA-159 / DSM 3647 / Goe1 / Go1 / JCM 11833 / OCM 88) (Methanosarcina frisia)).